A 192-amino-acid chain; its full sequence is Phosphomevalonate kinase (192 aa).

ATP is bound by residues 17-23 (KRKSGKD) and Arg141. A substrate-binding site is contributed by Asn170. ATP contacts are provided by His171 and Gln180.

Monomer.

The protein resides in the cytoplasm. It localises to the cytosol. The catalysed reaction is (R)-5-phosphomevalonate + ATP = (R)-5-diphosphomevalonate + ADP. It functions in the pathway isoprenoid biosynthesis; isopentenyl diphosphate biosynthesis via mevalonate pathway; isopentenyl diphosphate from (R)-mevalonate: step 2/3. In terms of biological role, catalyzes the reversible ATP-dependent phosphorylation of mevalonate 5-phosphate to produce mevalonate diphosphate and ADP, a key step in the mevalonic acid mediated biosynthesis of isopentenyl diphosphate and other polyisoprenoid metabolites. This is Phosphomevalonate kinase (PMVK) from Bos taurus (Bovine).